We begin with the raw amino-acid sequence, 377 residues long: Succinyl-diaminopimelate desuccinylase (377 aa).

Histidine 66 lines the Zn(2+) pocket. Aspartate 68 is a catalytic residue. Residue aspartate 99 participates in Zn(2+) binding. The active-site Proton acceptor is the glutamate 133. Glutamate 134, glutamate 162, and histidine 348 together coordinate Zn(2+).

It belongs to the peptidase M20A family. DapE subfamily. As to quaternary structure, homodimer. Zn(2+) serves as cofactor. Co(2+) is required as a cofactor.

It catalyses the reaction N-succinyl-(2S,6S)-2,6-diaminopimelate + H2O = (2S,6S)-2,6-diaminopimelate + succinate. The protein operates within amino-acid biosynthesis; L-lysine biosynthesis via DAP pathway; LL-2,6-diaminopimelate from (S)-tetrahydrodipicolinate (succinylase route): step 3/3. Catalyzes the hydrolysis of N-succinyl-L,L-diaminopimelic acid (SDAP), forming succinate and LL-2,6-diaminopimelate (DAP), an intermediate involved in the bacterial biosynthesis of lysine and meso-diaminopimelic acid, an essential component of bacterial cell walls. The chain is Succinyl-diaminopimelate desuccinylase from Methylococcus capsulatus (strain ATCC 33009 / NCIMB 11132 / Bath).